Consider the following 434-residue polypeptide: Quinolone resistance transporter (434 aa).

12 consecutive transmembrane segments (helical) span residues 15–35, 45–65, 85–105, 110–130, 142–162, 175–195, 241–261, 275–295, 306–326, 333–353, 367–387, and 396–416; these read LIPA…AVGF, GIGD…YFLF, ILLT…PKSF, FLLG…ITQW, MFVL…GLLL, WLFV…FLWL, VLLL…LNLW, IQIG…LLII, YGHL…SGWL, LAAL…FWTL, IALI…GIGL, and AAGL…TYIV.

It belongs to the major facilitator superfamily.

It localises to the cell inner membrane. Its function is as follows. Efflux pump that mediates resistance to quinolone-type antibiotics. The chain is Quinolone resistance transporter from Acinetobacter baumannii.